The chain runs to 826 residues: U4/U6 snRNA-associated-splicing factor PRP24 (826 aa).

RRM domains are found at residues 310–385 (TSVF…EAAG), 386–463 (ITLY…YSDP), 477–554 (REVH…LSVS), and 598–670 (RSFA…AVPQ).

Its subcellular location is the nucleus. Functions as a recycling factor of the spliceosome, a machinery that forms on each precursor-messenger RNA (pre-mRNA) and catalyzes the removal of introns. Chaperones the re-annealing of U4 and U6 snRNAs (small nuclear RNAs) released from previous rounds of splicing, an initial step in reforming the U4/U6-U5 tri-snRNP (small nuclear ribonucleoprotein) that can reassemble into another spliceosome complex; this step involves binding U6 and facilitating the unwinding of the U6 internal stem loop, followed by base-pairing of U6 to U4. This chain is U4/U6 snRNA-associated-splicing factor PRP24, found in Ophiostoma ulmi (Dutch elm disease fungus).